Consider the following 378-residue polypeptide: Zinc finger protein DPF3 (378 aa).

Lys-99 participates in a covalent cross-link: Glycyl lysine isopeptide (Lys-Gly) (interchain with G-Cter in SUMO2). A disordered region spans residues 145–193 (VLENDENVEEGNEEEDLEEDIPKRKNRTRGRARGSAGGRRRHDAASQED). A compositionally biased stretch (acidic residues) spans 148–163 (NDENVEEGNEEEDLEE). A compositionally biased stretch (basic residues) spans 168-186 (RKNRTRGRARGSAGGRRRH). The C2H2-type zinc-finger motif lies at 198-221 (YVCDICGKRYKNRPGLSYHYAHTH). The interval 225–254 (EEGDEAQDQETRSPPNHRNENHRPQKGPDG) is disordered. 2 consecutive PHD-type zinc fingers follow at residues 259–319 (NNYC…CKSC) and 316–366 (CKSC…CWEL). Residues 317–332 (KSCILCGTSENDDQLL) form an interaction with HDGFL2 region. Position 323 is a phosphoserine (Gly-323).

The protein belongs to the requiem/DPF family. In terms of assembly, component of the BAF complex, which includes at least actin (ACTB), ARID1A, ARID1B/BAF250, SMARCA2, SMARCA4/BRG1/BAF190A, ACTL6A/BAF53, ACTL6B/BAF53B, SMARCE1/BAF57, SMARCC1/BAF155, SMARCC2/BAF170, SMARCB1/SNF5/INI1, and one or more of SMARCD1/BAF60A, SMARCD2/BAF60B, or SMARCD3/BAF60C. In muscle cells, the BAF complex also contains DPF3. Interacts with acetylated histones H3 and H4. Component of neuron-specific chromatin remodeling complex (nBAF complex) composed of at least, ARID1A/BAF250A or ARID1B/BAF250B, SMARCD1/BAF60A, SMARCD3/BAF60C, SMARCA2/BRM/BAF190B, SMARCA4/BRG1/BAF190A, SMARCB1/BAF47, SMARCC1/BAF155, SMARCE1/BAF57, SMARCC2/BAF170, DPF1/BAF45B, DPF3/BAF45C, ACTL6B/BAF53B and actin. As to quaternary structure, interacts with HDGFL2, SMARCA4/BRG1/BAF190A, SMARCC1/BAF155 and SMARCD1/BAF60A. In terms of processing, phosphorylation at Ser-323 enhances its interaction with HDGFL2.

The protein localises to the nucleus. Its function is as follows. Belongs to the neuron-specific chromatin remodeling complex (nBAF complex). During neural development a switch from a stem/progenitor to a post-mitotic chromatin remodeling mechanism occurs as neurons exit the cell cycle and become committed to their adult state. The transition from proliferating neural stem/progenitor cells to post-mitotic neurons requires a switch in subunit composition of the npBAF and nBAF complexes. As neural progenitors exit mitosis and differentiate into neurons, npBAF complexes which contain ACTL6A/BAF53A and PHF10/BAF45A, are exchanged for homologous alternative ACTL6B/BAF53B and DPF1/BAF45B or DPF3/BAF45C subunits in neuron-specific complexes (nBAF). The npBAF complex is essential for the self-renewal/proliferative capacity of the multipotent neural stem cells. The nBAF complex along with CREST plays a role regulating the activity of genes essential for dendrite growth. Muscle-specific component of the BAF complex, a multiprotein complex involved in transcriptional activation and repression of select genes by chromatin remodeling (alteration of DNA-nucleosome topology). Specifically binds acetylated lysines on histone 3 and 4 (H3K14ac, H3K9ac, H4K5ac, H4K8ac, H4K12ac, H4K16ac). In the complex, it acts as a tissue-specific anchor between histone acetylations and methylations and chromatin remodeling. It thereby probably plays an essential role in heart and skeletal muscle development. In terms of biological role, acts as a regulator of myogenesis in cooperation with HDGFL2. Mediates the interaction of HDGFL2 with the BAF complex. HDGFL2-DPF3a activate myogenic genes by increasing chromatin accessibility through recruitment of SMARCA4/BRG1/BAF190A (ATPase subunit of the BAF complex) to myogenic gene promoters. This is Zinc finger protein DPF3 (DPF3) from Homo sapiens (Human).